The primary structure comprises 390 residues: MAMVKRINNLPTVKLAKQALPLLANPKLVNKAIDVVPLVVQGGRKLSKAAKRLLGAYGGNISYTEGAKPGAISAPVAISRRVAGMKPRFVRSEGSVKIVHREFIASVLPSSDLTVNNGDVNIGKYRVNPSNNALFTWLQGQAQLYDMYRFTRLRITYIPTTGSTSTGRVSLLWDRDSQDPLPIDRAAISSYAHSADSAPWAENVLVVPCDNTWRYMNDTNAVDRKLVDFGQFLFATYSGAGSTAHGDLYVEYAVEFKDPQPIAGMVCMFDRLVSLSEVGSTIKGVNYIADRDVITTGGNIGVNINIPGTYLVTIVLNATSIGPLTFTGNSKLVGNSLNLTSSGASALTFTLNSTGVPNSSDSSFSVGTVVALTRVRMTITRCSPETAYLA.

The tract at residues 95–256 (SVKIVHREFI…DLYVEYAVEF (162 aa)) is s domain, virion shell. Residues 257 to 390 (KDPQPIAGMV…RCSPETAYLA (134 aa)) are p domain, projecting.

This sequence belongs to the icosahedral plant coat protein family. As to quaternary structure, homodimer. Homomultimer. It depends on Ca(2+) as a cofactor.

The protein localises to the virion. Functionally, capsid protein self-assembles to form an icosahedral capsid with a T=3 symmetry, about 32-35 nm in diameter, and consisting of 180 capsid proteins. Also acts as a suppressor of RNA-mediated gene silencing, also known as post-transcriptional gene silencing (PTGS), a mechanism of plant viral defense that limits the accumulation of viral RNAs. The chain is Capsid protein from Cucumis melo (Muskmelon).